The chain runs to 196 residues: Molybdenum cofactor guanylyltransferase (196 aa).

GTP-binding positions include 10 to 12 (LAG), lysine 23, asparagine 51, aspartate 69, and aspartate 99. Aspartate 99 contributes to the Mg(2+) binding site.

The protein belongs to the MobA family. In terms of assembly, monomer. Requires Mg(2+) as cofactor.

It is found in the cytoplasm. It carries out the reaction Mo-molybdopterin + GTP + H(+) = Mo-molybdopterin guanine dinucleotide + diphosphate. Its function is as follows. Transfers a GMP moiety from GTP to Mo-molybdopterin (Mo-MPT) cofactor (Moco or molybdenum cofactor) to form Mo-molybdopterin guanine dinucleotide (Mo-MGD) cofactor. The polypeptide is Molybdenum cofactor guanylyltransferase (Shewanella sediminis (strain HAW-EB3)).